We begin with the raw amino-acid sequence, 731 residues long: Penicillin-binding protein 2a (731 aa).

Residues 1-56 (MKLDKLFEKFLSLFKKETSELEDSDSTILRRSRSDRKKLAQVGPIRKFWRRYHLTK) are Cytoplasmic-facing. A helical; Signal-anchor for type II membrane protein membrane pass occupies residues 57–77 (IILILGLSAGLLVGIYLFAVA). The segment at 78–156 (KSTNVNDLQN…FLAIVTAGRS (79 aa)) is hydrophobic; associated with cytoplasmic membrane. Required for transglycosylase activity, but not for lipid II binding. The tract at residues 78–300 (KSTNVNDLQN…SQLHDKYEGK (223 aa)) is transglycosylase. Over 78 to 731 (KSTNVNDLQN…IWDSIVNLFR (654 aa)) the chain is Extracellular. The active-site Proton donor; for transglycosylase activity is the Glu131. Positions 301-731 (ISDYRYPSYF…IWDSIVNLFR (431 aa)) are transpeptidase. Ser410 acts as the Acyl-ester intermediate; for transpeptidase activity in catalysis. Positions 674 to 694 (ANTKRQVQTNDNSQTDDNLSD) are disordered. Positions 676-690 (TKRQVQTNDNSQTDD) are enriched in polar residues.

It in the N-terminal section; belongs to the glycosyltransferase 51 family. In the C-terminal section; belongs to the transpeptidase family. In terms of assembly, homodimer. May also form higher order oligomers. Self-association may depend on its transmembrane and/or cytoplasmic regions. Interacts with MacP; interaction is required for the function of this protein.

It localises to the cell membrane. The protein resides in the secreted. Its subcellular location is the cell wall. The enzyme catalyses Preferential cleavage: (Ac)2-L-Lys-D-Ala-|-D-Ala. Also transpeptidation of peptidyl-alanyl moieties that are N-acyl substituents of D-alanine.. The catalysed reaction is [GlcNAc-(1-&gt;4)-Mur2Ac(oyl-L-Ala-gamma-D-Glu-L-Lys-D-Ala-D-Ala)](n)-di-trans,octa-cis-undecaprenyl diphosphate + beta-D-GlcNAc-(1-&gt;4)-Mur2Ac(oyl-L-Ala-gamma-D-Glu-L-Lys-D-Ala-D-Ala)-di-trans,octa-cis-undecaprenyl diphosphate = [GlcNAc-(1-&gt;4)-Mur2Ac(oyl-L-Ala-gamma-D-Glu-L-Lys-D-Ala-D-Ala)](n+1)-di-trans,octa-cis-undecaprenyl diphosphate + di-trans,octa-cis-undecaprenyl diphosphate + H(+). It functions in the pathway cell wall biogenesis; peptidoglycan biosynthesis. Its function is as follows. Cell wall formation. Synthesis of cross-linked peptidoglycan (PG) from the lipid intermediates. Binds dansylated lipid II and catalyzes the polymerization of glycan chains. Hydrolyzes S2d (N-benzoyl-D-alanylmercaptoacetic acid) molecule, a synthetic thiolester analog of cell wall stem peptide. Active against bocillin, a fluorescent penicillin. No transpeptidase activity with non-fluorescent lysine-containing lipid II as substrate. In Streptococcus pneumoniae serotype 2 (strain D39 / NCTC 7466), this protein is Penicillin-binding protein 2a.